Consider the following 152-residue polypeptide: MDNKLSSENNQLSSEKILGLLPHRYPFALVDKVIENIPGERAVAVKNVTINEPQFQGHFPERPLMPGVLIVESMAQVGGIIVTQMPDLPKGLFVFAGINNVKFRKPVLPGDQLIITCDLLSIKRQRFGKVKGEAHVDGNLVCAGELMFSLVD.

The active site involves His58.

This sequence belongs to the thioester dehydratase family. FabZ subfamily.

Its subcellular location is the cytoplasm. The enzyme catalyses a (3R)-hydroxyacyl-[ACP] = a (2E)-enoyl-[ACP] + H2O. In terms of biological role, involved in unsaturated fatty acids biosynthesis. Catalyzes the dehydration of short chain beta-hydroxyacyl-ACPs and long chain saturated and unsaturated beta-hydroxyacyl-ACPs. The sequence is that of 3-hydroxyacyl-[acyl-carrier-protein] dehydratase FabZ from Prochlorococcus marinus (strain MIT 9312).